Reading from the N-terminus, the 366-residue chain is Ribosomal RNA large subunit methyltransferase M (366 aa).

S-adenosyl-L-methionine contacts are provided by residues Ser-188, 221 to 224, Asp-240, Asp-260, and Asp-277; that span reads CPGG. The Proton acceptor role is filled by Lys-306.

It belongs to the class I-like SAM-binding methyltransferase superfamily. RNA methyltransferase RlmE family. RlmM subfamily. As to quaternary structure, monomer.

Its subcellular location is the cytoplasm. The catalysed reaction is cytidine(2498) in 23S rRNA + S-adenosyl-L-methionine = 2'-O-methylcytidine(2498) in 23S rRNA + S-adenosyl-L-homocysteine + H(+). Functionally, catalyzes the 2'-O-methylation at nucleotide C2498 in 23S rRNA. The protein is Ribosomal RNA large subunit methyltransferase M of Escherichia coli O127:H6 (strain E2348/69 / EPEC).